We begin with the raw amino-acid sequence, 593 residues long: Arginine--tRNA ligase (593 aa).

The 'HIGH' region motif lies at 138–148 (ANPTGPLHVGH).

It belongs to the class-I aminoacyl-tRNA synthetase family. In terms of assembly, monomer.

It localises to the cytoplasm. The catalysed reaction is tRNA(Arg) + L-arginine + ATP = L-arginyl-tRNA(Arg) + AMP + diphosphate. The chain is Arginine--tRNA ligase from Burkholderia vietnamiensis (strain G4 / LMG 22486) (Burkholderia cepacia (strain R1808)).